Reading from the N-terminus, the 346-residue chain is Phosphoribosylformylglycinamidine cyclo-ligase (346 aa).

Belongs to the AIR synthase family.

Its subcellular location is the cytoplasm. The catalysed reaction is 2-formamido-N(1)-(5-O-phospho-beta-D-ribosyl)acetamidine + ATP = 5-amino-1-(5-phospho-beta-D-ribosyl)imidazole + ADP + phosphate + H(+). It functions in the pathway purine metabolism; IMP biosynthesis via de novo pathway; 5-amino-1-(5-phospho-D-ribosyl)imidazole from N(2)-formyl-N(1)-(5-phospho-D-ribosyl)glycinamide: step 2/2. This chain is Phosphoribosylformylglycinamidine cyclo-ligase, found in Geobacillus sp. (strain WCH70).